The chain runs to 757 residues: Serine/threonine-protein phosphatase with EF-hands 2 (757 aa).

The IQ domain occupies 21 to 46 (KAAALIQRWYRRYMARLEMRRRCTWN). The tract at residues 128-544 (ATALVEAFRL…PHIVQYQANK (417 aa)) is catalytic. 4 residues coordinate Mn(2+): aspartate 179, histidine 181, aspartate 208, and asparagine 240. The Proton donor role is filled by histidine 241. Histidine 292 provides a ligand contact to Mn(2+). A disordered region spans residues 318–349 (CKTRKESENREEQKRKDNQTSSGQKPTPWFLP). The span at 321–335 (RKESENREEQKRKDN) shows a compositional bias: basic and acidic residues. Residue histidine 492 coordinates Mn(2+). EF-hand domains are found at residues 572–607 (AHSSDLLVEFRKRDPDESGVITLSDWATAVESVLHL), 656–691 (RNRSNLETIFRIIDSDHSGFISLDEFRQTWKLFSSH), and 696–731 (ITDDGICDLARSIDFNKDGHIDINEFLEAFRLVEQS). Ca(2+)-binding residues include aspartate 585, aspartate 587, serine 589, aspartate 596, aspartate 669, aspartate 671, serine 673, glutamate 680, aspartate 709, asparagine 711, aspartate 713, histidine 715, and glutamate 720.

It belongs to the PPP phosphatase family. Requires Mn(2+) as cofactor. As to expression, detected in retina, more specifically in photoreceptors.

It carries out the reaction O-phospho-L-seryl-[protein] + H2O = L-seryl-[protein] + phosphate. The catalysed reaction is O-phospho-L-threonyl-[protein] + H2O = L-threonyl-[protein] + phosphate. Activated by calcium. In terms of biological role, may play a role in phototransduction. May dephosphorylate photoactivated rhodopsin. May function as a calcium sensing regulator of ionic currents, energy production or synaptic transmission. This is Serine/threonine-protein phosphatase with EF-hands 2 (Ppef2) from Mus musculus (Mouse).